An 870-amino-acid chain; its full sequence is Breast cancer anti-estrogen resistance protein 1 (870 aa).

Residue Met1 is modified to N-acetylmethionine. Positions 3 to 65 constitute an SH3 domain; that stretch reads HLNVLAKALY…PGNRLKILVG (63 aa). The disordered stretch occupies residues 70–156; that stretch reads KPAGPGPGPP…TFSKQTPHHP (87 aa). Over residues 73–85 the composition is skewed to pro residues; it reads GPGPGPPATPAQP. The span at 97-111 shows a compositional bias: polar residues; that stretch reads SQYTPMLPNTYQPQP. The segment at 115 to 416 is substrate for kinases; the sequence is YLVPTPSKAQ…SGVYAVPPPA (302 aa). Tyr128 is subject to Phosphotyrosine; by SRC. A phosphoserine mark is found at Ser134 and Ser139. Over residues 135-151 the composition is skewed to polar residues; that stretch reads PQFQSPPAKQTSTFSKQ. The residue at position 234 (Tyr234) is a Phosphotyrosine. Tyr249 carries the phosphotyrosine; by ABL1 modification. Position 269 is a phosphothreonine (Thr269). Ser292 bears the Phosphoserine mark. Tyr362, Tyr372, and Tyr410 each carry phosphotyrosine. Disordered stretches follow at residues 411–449, 609–658, and 715–734; these read AVPPPAEREAPAEGKRLSASSTGSTRSSQSASSLEVAGP, KATA…NSEG, and IDHDLANWTPAQPLAPGRTG. Positions 416 to 426 are enriched in basic and acidic residues; sequence AEREAPAEGKR. A compositionally biased stretch (low complexity) spans 427-444; it reads LSASSTGSTRSSQSASSL. Phosphoserine is present on residues Ser428, Ser437, and Ser639. Positions 626-655 are enriched in polar residues; that stretch reads TDKTSSIQSRPLPSPPKFTSQDSPDGQYEN. Residues 635–643 carry the SH3-binding motif; it reads RPLPSPPKF. The divergent helix-loop-helix motif stretch occupies residues 746 to 796; sequence FYLEQCEANLTTLTNAVDAFFTAVATNQPPKIFVAHSKFVILSAHKLVFIG.

Belongs to the CAS family. In terms of assembly, forms complexes in vivo with PTK2/FAK1, adapter protein CRKL and LYN kinase. Heterodimerizes with NEDD9. Component of a complex comprised of SH2D3C, BCAR1/CAS, and CRK. Within the complex, interacts with SH2D3C (via C-terminus), and CRK. Part of a complex comprised of PTPRA, BCAR1, BCAR3 (via SH2 domain) and SRC; the formation of the complex is dependent on integrin mediated-tyrosine phosphorylation of PTPRA. Interacts with BCAR3 (via Ras-GEF domain); the interaction regulates adhesion-dependent serine phosphorylation. Interacts with SMAD2 and SMAD3. Interacts with NPHP1. Interacts with PTK2B/PYK2. Interacts (via C-terminus) with SH2D3C/CHAT isoform 2 (via C-terminus). Interacts with activated CSPG4. Interacts with BMX, INPPL1/SHIP2 and PEAK1. Part of a collagen-stimulated complex involved in cell migration made of CDC42, CRK, TNK2 and BCAR1/p130cas. Interacts with TNK2 via SH3 domains. Interacts (when tyrosine-phosphorylated) with tensin TNS1; the interaction is increased by phosphorylation of TNS1. PTK2/FAK1 activation mediates phosphorylation at the YDYVHL motif; phosphorylation is most likely catalyzed by SRC family members. SRC-family kinases are recruited to the phosphorylated sites and can phosphorylate other tyrosine residues. Tyrosine phosphorylation is triggered by integrin-mediated adhesion of cells to the extracellular matrix. In terms of processing, dephosphorylated by PTPN14 at Tyr-128. Post-translationally, phosphorylated by SRC kinase in a EDN1- and PTK2B-mediated manner; phosphorylation strengthens its interaction with BCAR3 as part of the PTK2B/BCAR1/BCAR3/RAP1 signaling pathway. Expressed in B-cells (at protein level). Widely expressed with an abundant expression in the testis. Low level of expression seen in the liver, thymus, and peripheral blood leukocytes.

The protein resides in the cell junction. It is found in the focal adhesion. Its subcellular location is the cytoplasm. The protein localises to the cell projection. It localises to the axon. Functionally, docking protein which plays a central coordinating role for tyrosine kinase-based signaling related to cell adhesion. Implicated in induction of cell migration and cell branching. Involved in the BCAR3-mediated inhibition of TGFB signaling. This Homo sapiens (Human) protein is Breast cancer anti-estrogen resistance protein 1 (BCAR1).